The chain runs to 362 residues: Vignain (362 aa).

The N-terminal stretch at M1–A20 is a signal peptide. Residues N21–G126 constitute a propeptide, activation peptide. Disulfide bonds link C149–C191, C183–C224, and C282–C334. C152 is an active-site residue. Active-site residues include H288 and N309. Residues N326 and N346 are each glycosylated (N-linked (GlcNAc...) asparagine). The propeptide at G353 to L362 is removed in mature form. Residues K359–L362 carry the Prevents secretion from ER motif.

It belongs to the peptidase C1 family. In terms of processing, the mature protein is not glycosylated. The precursor stored in the endoplasmic reticulum lumen is processed during the transport to proteins bodies to two dominant mature forms that differ by a single amino acid residue at the N-terminus.

The protein resides in the endoplasmic reticulum lumen. Its subcellular location is the vacuole. It is found in the aleurone grain. Thought to be involved in the hydrolysis of stored seed proteins. In vitro, catalyzes the hydrolysis of proteins, such as azocasein. Shows a preferential cleavage for Asn-|-Xaa in small molecule substrates such as Boc-Asn-|-OPHNO(2). This Vigna mungo (Black gram) protein is Vignain.